The chain runs to 39 residues: Photosystem II reaction center protein J (39 aa).

The helical transmembrane segment at 9-29 (LWLVGLVGGLAVITMLGLFIY) threads the bilayer.

Belongs to the PsbJ family. As to quaternary structure, PSII is composed of 1 copy each of membrane proteins PsbA, PsbB, PsbC, PsbD, PsbE, PsbF, PsbH, PsbI, PsbJ, PsbK, PsbL, PsbM, PsbT, PsbX, PsbY, PsbZ, Psb30/Ycf12, at least 3 peripheral proteins of the oxygen-evolving complex and a large number of cofactors. It forms dimeric complexes.

The protein localises to the plastid. Its subcellular location is the chloroplast thylakoid membrane. Its function is as follows. One of the components of the core complex of photosystem II (PSII). PSII is a light-driven water:plastoquinone oxidoreductase that uses light energy to abstract electrons from H(2)O, generating O(2) and a proton gradient subsequently used for ATP formation. It consists of a core antenna complex that captures photons, and an electron transfer chain that converts photonic excitation into a charge separation. The chain is Photosystem II reaction center protein J from Phaeodactylum tricornutum (strain CCAP 1055/1).